Here is a 416-residue protein sequence, read N- to C-terminus: Serine hydroxymethyltransferase (416 aa).

(6S)-5,6,7,8-tetrahydrofolate is bound by residues L121 and 125–127 (GHL). The residue at position 230 (K230) is an N6-(pyridoxal phosphate)lysine. 354-356 (SPF) contacts (6S)-5,6,7,8-tetrahydrofolate.

It belongs to the SHMT family. As to quaternary structure, homodimer. Pyridoxal 5'-phosphate serves as cofactor.

The protein localises to the cytoplasm. The enzyme catalyses (6R)-5,10-methylene-5,6,7,8-tetrahydrofolate + glycine + H2O = (6S)-5,6,7,8-tetrahydrofolate + L-serine. It functions in the pathway one-carbon metabolism; tetrahydrofolate interconversion. It participates in amino-acid biosynthesis; glycine biosynthesis; glycine from L-serine: step 1/1. Its function is as follows. Catalyzes the reversible interconversion of serine and glycine with tetrahydrofolate (THF) serving as the one-carbon carrier. This reaction serves as the major source of one-carbon groups required for the biosynthesis of purines, thymidylate, methionine, and other important biomolecules. Also exhibits THF-independent aldolase activity toward beta-hydroxyamino acids, producing glycine and aldehydes, via a retro-aldol mechanism. The chain is Serine hydroxymethyltransferase from Prochlorococcus marinus (strain MIT 9211).